We begin with the raw amino-acid sequence, 1948 residues long: [F-actin]-monooxygenase MICAL2 (1948 aa).

The monooxygenase domain stretch occupies residues glycine 2–aspartate 494. Residues cysteine 97, glutamate 116–arginine 118, arginine 123–asparagine 125, phenylalanine 183, tyrosine 298, and aspartate 398 contribute to the FAD site. A Calponin-homology (CH) domain is found at aspartate 516–glutamate 619. Serine 631 carries the phosphoserine modification. Positions arginine 660 to glutamine 681 match the Nuclear localization signal motif. 3 disordered regions span residues proline 664–asparagine 709, serine 753–lysine 776, and lysine 891–serine 923. Polar residues predominate over residues serine 693–asparagine 709. Positions alanine 896–proline 917 are enriched in pro residues. The LIM zinc-binding domain occupies aspartate 980–serine 1042. Residues cysteine 982, cysteine 985, histidine 1003, cysteine 1006, cysteine 1009, cysteine 1012, cysteine 1032, and histidine 1035 each coordinate Zn(2+). Disordered stretches follow at residues glutamine 1045–glycine 1134, serine 1146–threonine 1185, and glutamine 1233–serine 1298. The span at alanine 1050 to glutamate 1059 shows a compositional bias: basic and acidic residues. Positions glutamine 1233 to alanine 1243 are enriched in polar residues. A compositionally biased stretch (low complexity) spans serine 1254–proline 1271. Over residues aspartate 1277–isoleucine 1292 the composition is skewed to polar residues. Residues threonine 1300 to glutamate 1339 are interaction with MAPK1. 4 disordered regions span residues glutamine 1478–leucine 1505, serine 1519–valine 1622, glycine 1672–lysine 1726, and serine 1739–serine 1767. Over residues alanine 1522–threonine 1534 the composition is skewed to basic and acidic residues. Low complexity predominate over residues lysine 1570–serine 1579. Residues proline 1580 to serine 1591 show a composition bias toward polar residues. Residues glycine 1672–glycine 1682 are compositionally biased toward basic and acidic residues. A Phosphoserine modification is found at serine 1677. 2 stretches are compositionally biased toward polar residues: residues valine 1698–aspartate 1715 and glutamate 1747–serine 1756. Positions lysine 1786–asparagine 1936 constitute a bMERB domain.

Belongs to the Mical family. As to quaternary structure, interacts with PLXNA4. Interacts with RAB1B. Interacts with MAPK1/ERK2. Interacts with RAB35, RAB8A, RAB10, RAB13 and RAB15 (in their GTP-bound forms); binding to RAB35 is of low affinity compared to other Rab proteins; at least in case of RAB8A may bind 2 molecules of RAB8A simultaneously through a high and a low affinity binding site, respectively. May interact with MAPK1/ERK2. It depends on FAD as a cofactor.

The protein resides in the nucleus. Its subcellular location is the cytoplasm. It catalyses the reaction L-methionyl-[F-actin] + NADPH + O2 + H(+) = L-methionyl-(R)-S-oxide-[F-actin] + NADP(+) + H2O. Methionine monooxygenase that promotes depolymerization of F-actin by mediating oxidation of residues 'Met-44' and 'Met-47' on actin to form methionine-sulfoxide, resulting in actin filament disassembly and preventing repolymerization. Regulates the disassembly of branched actin networks also by oxidizing ARP3B-containing ARP2/3 complexes leading to ARP3B dissociation from the network. Acts as a key regulator of the SRF signaling pathway elicited by nerve growth factor and serum: mediates oxidation and subsequent depolymerization of nuclear actin, leading to increase MKL1/MRTF-A presence in the nucleus and promote SRF:MKL1/MRTF-A-dependent gene transcription. Does not activate SRF:MKL1/MRTF-A through RhoA. This is [F-actin]-monooxygenase MICAL2 from Rattus norvegicus (Rat).